The chain runs to 632 residues: Biosynthetic arginine decarboxylase (632 aa).

K101 carries the N6-(pyridoxal phosphate)lysine modification. 281-291 (FDVGGGLGVDY) lines the substrate pocket.

It belongs to the Orn/Lys/Arg decarboxylase class-II family. SpeA subfamily. Mg(2+) serves as cofactor. The cofactor is pyridoxal 5'-phosphate.

The catalysed reaction is L-arginine + H(+) = agmatine + CO2. The protein operates within amine and polyamine biosynthesis; agmatine biosynthesis; agmatine from L-arginine: step 1/1. Catalyzes the biosynthesis of agmatine from arginine. This is Biosynthetic arginine decarboxylase from Salmonella dublin (strain CT_02021853).